The sequence spans 240 residues: Citrate synthase-lysine N-methyltransferase CSKMT, mitochondrial (240 aa).

The N-terminal 21 residues, 1 to 21 (MAALRRMLHLPRLTMGTCRPF), are a transit peptide targeting the mitochondrion.

This sequence belongs to the methyltransferase superfamily.

It localises to the mitochondrion. It catalyses the reaction L-lysyl-[citrate synthase] + S-adenosyl-L-methionine = N(6)-methyl-L-lysyl-[citrate synthase] + S-adenosyl-L-homocysteine + H(+). The catalysed reaction is N(6)-methyl-L-lysyl-[citrate synthase] + S-adenosyl-L-methionine = N(6),N(6)-dimethyl-L-lysyl-[citrate synthase] + S-adenosyl-L-homocysteine + H(+). It carries out the reaction N(6),N(6)-dimethyl-L-lysyl-[citrate synthase] + S-adenosyl-L-methionine = N(6),N(6),N(6)-trimethyl-L-lysyl-[citrate synthase] + S-adenosyl-L-homocysteine + H(+). Citrate synthase-lysine methyltransferase activity is inhibited by S-adenosylhomocysteine (AdoHcy) and oxaloacetate (OAA). In terms of biological role, protein-lysine methyltransferase that selectively trimethylates citrate synthase (CS) in mitochondria. Seems to conduct trimethylation in a highly distributive manner rather than in a processive manner, and thus introduces a single methyl group per binding event. The polypeptide is Citrate synthase-lysine N-methyltransferase CSKMT, mitochondrial (Pongo abelii (Sumatran orangutan)).